We begin with the raw amino-acid sequence, 198 residues long: Dephospho-CoA kinase (198 aa).

A DPCK domain is found at 4 to 198 (FLGLTGGIAS…LSDLLQEIGR (195 aa)). Residue 12 to 17 (ASGKST) coordinates ATP.

It belongs to the CoaE family.

The protein localises to the cytoplasm. The catalysed reaction is 3'-dephospho-CoA + ATP = ADP + CoA + H(+). The protein operates within cofactor biosynthesis; coenzyme A biosynthesis; CoA from (R)-pantothenate: step 5/5. In terms of biological role, catalyzes the phosphorylation of the 3'-hydroxyl group of dephosphocoenzyme A to form coenzyme A. This chain is Dephospho-CoA kinase, found in Lactobacillus johnsonii (strain CNCM I-12250 / La1 / NCC 533).